The sequence spans 1749 residues: E3 ubiquitin-protein ligase UBR1 (1749 aa).

Position 2 is an N-acetylalanine (Ala-2). Thr-21 carries the post-translational modification Phosphothreonine. The UBR-type zinc-finger motif lies at 97-168 (QLCGRVFKSG…TGPFCVNHEP (72 aa)). Residues Cys-99, Cys-112, Cys-115, Cys-124, Cys-127, His-133, and His-136 each contribute to the Zn(2+) site. A peptide is bound at residue Phe-148. Residue Cys-149 coordinates Zn(2+). Residue Asp-150 participates in a peptide binding. Cys-151 provides a ligand contact to Zn(2+). Asp-153 lines the a peptide pocket. Positions 163 and 166 each coordinate Zn(2+). Positions 842–868 (QHSKAEHMQKKRRKQENKDEALPPPPP) are disordered. Residues 1019–1054 (RKRKAEAARLHRQKIMAQMSALQKNFIETHKLMYDN) form a UBC2-binding region (U2BR) region. Zn(2+) is bound by residues Cys-1098, Cys-1101, Cys-1159, His-1161, His-1164, and Cys-1167. The RING-type; atypical zinc-finger motif lies at 1098-1201 (CILCQEEQEV…SGEYLCPLCK (104 aa)). A Phosphoserine modification is found at Ser-1179. Zn(2+) contacts are provided by Cys-1197, Cys-1200, Cys-1627, Cys-1630, and Cys-1653.

This sequence belongs to the E3 ubiquitin-protein ligase UBR1-like family. Interacts with RECQL4. As to expression, broadly expressed, with highest levels in skeletal muscle, kidney and pancreas. Present in acinar cells of the pancreas (at protein level).

The protein resides in the cytoplasm. It localises to the cytosol. It catalyses the reaction S-ubiquitinyl-[E2 ubiquitin-conjugating enzyme]-L-cysteine + [acceptor protein]-L-lysine = [E2 ubiquitin-conjugating enzyme]-L-cysteine + N(6)-ubiquitinyl-[acceptor protein]-L-lysine.. The protein operates within protein modification; protein ubiquitination. Its activity is regulated as follows. Inhibited by the small-molecule compound RF-C11, which bears two heterovalent ligands: RF-C11 inhibits activity toward both type-1 and type-2 N-degrons. Its function is as follows. E3 ubiquitin-protein ligase which is a component of the N-end rule pathway. Recognizes and binds proteins bearing specific N-terminal residues that are destabilizing according to the N-end rule, leading to their ubiquitination and subsequent degradation. Recognizes both type-1 and type-2 N-degrons, containing positively charged amino acids (Arg, Lys and His) and bulky and hydrophobic amino acids, respectively. Does not ubiquitinate proteins that are acetylated at the N-terminus. In contrast, it strongly binds methylated N-degrons. Binds leucine and is a negative regulator of the leucine-mTOR signaling pathway, thereby controlling cell growth. This is E3 ubiquitin-protein ligase UBR1 from Homo sapiens (Human).